Here is a 233-residue protein sequence, read N- to C-terminus: Large ribosomal subunit protein uL1 (233 aa).

This sequence belongs to the universal ribosomal protein uL1 family. In terms of assembly, part of the 50S ribosomal subunit.

Functionally, binds directly to 23S rRNA. The L1 stalk is quite mobile in the ribosome, and is involved in E site tRNA release. In terms of biological role, protein L1 is also a translational repressor protein, it controls the translation of the L11 operon by binding to its mRNA. The polypeptide is Large ribosomal subunit protein uL1 (Aeromonas hydrophila subsp. hydrophila (strain ATCC 7966 / DSM 30187 / BCRC 13018 / CCUG 14551 / JCM 1027 / KCTC 2358 / NCIMB 9240 / NCTC 8049)).